A 50-amino-acid polypeptide reads, in one-letter code: Protein PsbN (50 aa).

The helical transmembrane segment at isoleucine 14–phenylalanine 34 threads the bilayer.

The protein belongs to the PsbN family.

Its subcellular location is the cellular thylakoid membrane. In terms of biological role, may play a role in photosystem I and II biogenesis. The protein is Protein PsbN of Prochlorococcus marinus (strain MIT 9301).